Here is a 664-residue protein sequence, read N- to C-terminus: Macoilin (664 aa).

Helical transmembrane passes span 28–48 (TFLYLKFLVVWALVLLADFVL), 75–95 (AFSVFFVCVAFTSNIICLLFI), 120–140 (VCLPTVSLWILFVYIEAAIRF), and 154–174 (FAAHCIGYPVVTLGFGFKSYV). Over residues 253 to 265 (REKGKEKDKDAKK) the composition is skewed to basic and acidic residues. The tract at residues 253 to 274 (REKGKEKDKDAKKHNLGINNNN) is disordered. Serine 305 carries the post-translational modification Phosphoserine. Residues 320-348 (KNYKNASGVVNSSPRSHSATNGSIPSSSS) are compositionally biased toward polar residues. The disordered stretch occupies residues 320 to 375 (KNYKNASGVVNSSPRSHSATNGSIPSSSSKNEKKQKCTSKSPSTHKDLMENCIPNN). Asparagine 324 carries N-linked (GlcNAc...) asparagine glycosylation. Residue serine 332 is modified to Phosphoserine. N-linked (GlcNAc...) asparagine glycans are attached at residues asparagine 340 and asparagine 452. A disordered region spans residues 630–664 (TSPLSPVSPHYSSKFVETSPSGLDPNASVYQPLKK). Residues serine 631 and serine 634 each carry the phosphoserine modification. The N-linked (GlcNAc...) asparagine glycan is linked to asparagine 655.

The protein belongs to the macoilin family.

It is found in the rough endoplasmic reticulum membrane. It localises to the nucleus membrane. Functionally, plays a role in the regulation of neuronal activity. This Macaca mulatta (Rhesus macaque) protein is Macoilin (MACO1).